Consider the following 171-residue polypeptide: ATP synthase subunit b (171 aa).

Residues 13–33 form a helical membrane-spanning segment; it reads GVEWGTTFVTLVTFVILIILL.

This sequence belongs to the ATPase B chain family. In terms of assembly, F-type ATPases have 2 components, F(1) - the catalytic core - and F(0) - the membrane proton channel. F(1) has five subunits: alpha(3), beta(3), gamma(1), delta(1), epsilon(1). F(0) has three main subunits: a(1), b(2) and c(10-14). The alpha and beta chains form an alternating ring which encloses part of the gamma chain. F(1) is attached to F(0) by a central stalk formed by the gamma and epsilon chains, while a peripheral stalk is formed by the delta and b chains.

It localises to the cell membrane. Functionally, f(1)F(0) ATP synthase produces ATP from ADP in the presence of a proton or sodium gradient. F-type ATPases consist of two structural domains, F(1) containing the extramembraneous catalytic core and F(0) containing the membrane proton channel, linked together by a central stalk and a peripheral stalk. During catalysis, ATP synthesis in the catalytic domain of F(1) is coupled via a rotary mechanism of the central stalk subunits to proton translocation. In terms of biological role, component of the F(0) channel, it forms part of the peripheral stalk, linking F(1) to F(0). This is ATP synthase subunit b from Staphylococcus epidermidis (strain ATCC 12228 / FDA PCI 1200).